Here is a 560-residue protein sequence, read N- to C-terminus: Eukaryotic translation initiation factor 3 subunit D-1 (560 aa).

The disordered stretch occupies residues 98 to 166 (VQKPPHQRGR…RGPPPKMRES (69 aa)). Residues 100–121 (KPPHQRGRFRNMRNSRSGRGRN) are compositionally biased toward basic residues. A Phosphothreonine modification is found at Thr-128. Positions 147–156 (GRGMGKKFGH) are enriched in basic residues. The tract at residues 291 to 305 (EFDLLTVNESSVEPP) is RNA gate.

Belongs to the eIF-3 subunit D family. As to quaternary structure, component of the eukaryotic translation initiation factor 3 (eIF-3) complex. The eIF-3 complex interacts with pix.

Its subcellular location is the cytoplasm. In terms of biological role, mRNA cap-binding component of the eukaryotic translation initiation factor 3 (eIF-3) complex, which is involved in protein synthesis of a specialized repertoire of mRNAs and, together with other initiation factors, stimulates binding of mRNA and methionyl-tRNAi to the 40S ribosome. The eIF-3 complex specifically targets and initiates translation of a subset of mRNAs involved in cell proliferation. In the eIF-3 complex, eif3d specifically recognizes and binds the 7-methylguanosine cap of a subset of mRNAs. The protein is Eukaryotic translation initiation factor 3 subunit D-1 of Drosophila melanogaster (Fruit fly).